Reading from the N-terminus, the 293-residue chain is MQGKIFILPKDSTNQQFVELSHPLTGRPLRYLLTNDHLLQILQVGDSSKQRSWFVGDHVVSDGYLYVCTPIDLLALVLPIIQELTWSRRKEPNRYVSFEDFIEHFDNMGPHYPRVSEVLSPNLLNTLHRICKVNEPVGSLPKTFQLDESSVVKILLRKAKVAQENLPPSIVTELKKQLAPLDLRTPLPQDLLELSCKWHAASLVCEDLQPEWYNKLAYWQEELAPLHAYTKNLEESRKILVEKEALLNSKKRPQNSDITSSLLKKPNRKQATKKSKYFSGEGMTKISSFFTKK.

The tract at residues 251-278 is disordered; it reads KRPQNSDITSSLLKKPNRKQATKKSKYF. Basic residues predominate over residues 265-276; that stretch reads KPNRKQATKKSK.

The protein belongs to the RNase H2 subunit B family. As to quaternary structure, component of the RNase H2 complex.

The protein localises to the nucleus. The protein resides in the cytoplasm. Functionally, non catalytic subunit of RNase H2, an endonuclease that specifically degrades the RNA of RNA:DNA hybrids. Participates in DNA replication, possibly by mediating the removal of lagging-strand Okazaki fragment RNA primers during DNA replication. Mediates the excision of single ribonucleotides from DNA:RNA duplexes. This is Ribonuclease H2 subunit B (rnh202) from Schizosaccharomyces pombe (strain 972 / ATCC 24843) (Fission yeast).